The primary structure comprises 210 residues: Urease accessory protein UreG (210 aa).

14–21 contributes to the GTP binding site; sequence GPVGSGKT.

The protein belongs to the SIMIBI class G3E GTPase family. UreG subfamily. In terms of assembly, homodimer. UreD, UreF and UreG form a complex that acts as a GTP-hydrolysis-dependent molecular chaperone, activating the urease apoprotein by helping to assemble the nickel containing metallocenter of UreC. The UreE protein probably delivers the nickel.

It localises to the cytoplasm. Its function is as follows. Facilitates the functional incorporation of the urease nickel metallocenter. This process requires GTP hydrolysis, probably effectuated by UreG. This Rhodopseudomonas palustris (strain BisB5) protein is Urease accessory protein UreG.